A 288-amino-acid polypeptide reads, in one-letter code: Type II restriction enzyme DpnII (288 aa).

It belongs to the DpnII type II restriction endonuclease family. In terms of assembly, homodimer.

The enzyme catalyses Endonucleolytic cleavage of DNA to give specific double-stranded fragments with terminal 5'-phosphates.. Functionally, a P subtype restriction enzyme that recognizes the double-stranded unmethylated sequence 5'-GATC-3' and cleaves before G-1. The sequence is that of Type II restriction enzyme DpnII from Streptococcus pneumoniae.